Reading from the N-terminus, the 123-residue chain is N(4)-acetylcytidine amidohydrolase (123 aa).

One can recognise an ASCH domain in the interval 6 to 101 (ITFYQRFEAD…EIIFWVIQFS (96 aa)). K21 acts as the Proton acceptor in catalysis. S24 functions as the Nucleophile in the catalytic mechanism. Residue E74 is the Proton donor of the active site.

This sequence belongs to the N(4)-acetylcytidine amidohydrolase family.

It catalyses the reaction N(4)-acetylcytidine + H2O = cytidine + acetate + H(+). It carries out the reaction N(4)-acetyl-2'-deoxycytidine + H2O = 2'-deoxycytidine + acetate + H(+). The enzyme catalyses N(4)-acetylcytosine + H2O = cytosine + acetate + H(+). Functionally, catalyzes the hydrolysis of N(4)-acetylcytidine (ac4C). The protein is N(4)-acetylcytidine amidohydrolase of Haemophilus influenzae (strain ATCC 51907 / DSM 11121 / KW20 / Rd).